Consider the following 122-residue polypeptide: Small ribosomal subunit protein uS13 (122 aa).

Residues 95–122 (GLPVRGQRTHTNARTRKGKAKPIAGKKK) form a disordered region.

Belongs to the universal ribosomal protein uS13 family. As to quaternary structure, part of the 30S ribosomal subunit. Forms a loose heterodimer with protein S19. Forms two bridges to the 50S subunit in the 70S ribosome.

Functionally, located at the top of the head of the 30S subunit, it contacts several helices of the 16S rRNA. In the 70S ribosome it contacts the 23S rRNA (bridge B1a) and protein L5 of the 50S subunit (bridge B1b), connecting the 2 subunits; these bridges are implicated in subunit movement. Contacts the tRNAs in the A and P-sites. This Zymomonas mobilis subsp. mobilis (strain ATCC 31821 / ZM4 / CP4) protein is Small ribosomal subunit protein uS13.